We begin with the raw amino-acid sequence, 139 residues long: Large ribosomal subunit protein uL16 (139 aa).

Belongs to the universal ribosomal protein uL16 family. As to quaternary structure, part of the 50S ribosomal subunit.

Functionally, binds 23S rRNA and is also seen to make contacts with the A and possibly P site tRNAs. This is Large ribosomal subunit protein uL16 from Microcystis aeruginosa (strain NIES-843 / IAM M-2473).